Reading from the N-terminus, the 355-residue chain is MTDHVSLNYKDAGVDIHAGYLLVERIKKAVKQTHRPEVIGGLGGFGALCALPQKYREPILVSGTDGVGTKLRLAIDLKRHETIGIDLVAMCVNDLIVQGAEPLFFLDYFATGQLDVETAACVIAGIAEGCQQAGCALVGGETAEMPGMYQAKDYDLAGFCLGVVEKSKLINGHQNVKSGDTLLALASSGLHSNGYSLVRQVLNLSKKDPETWMLNGKSLADHLLEPTRIYVKSILTLIETQNVDIHAIAHLTGGGFFENIPRVLPKNTCVLIEESSWQWPCIFDWLQKTGNINKQEMYRTFNCGVGMIIALPENQADKTLDFLTSVGEKAWRIGRVDSSKTSSERIIFKKSILNN.

It belongs to the AIR synthase family.

The protein localises to the cytoplasm. The enzyme catalyses 2-formamido-N(1)-(5-O-phospho-beta-D-ribosyl)acetamidine + ATP = 5-amino-1-(5-phospho-beta-D-ribosyl)imidazole + ADP + phosphate + H(+). It functions in the pathway purine metabolism; IMP biosynthesis via de novo pathway; 5-amino-1-(5-phospho-D-ribosyl)imidazole from N(2)-formyl-N(1)-(5-phospho-D-ribosyl)glycinamide: step 2/2. The chain is Phosphoribosylformylglycinamidine cyclo-ligase from Hamiltonella defensa subsp. Acyrthosiphon pisum (strain 5AT).